Reading from the N-terminus, the 118-residue chain is Large ribosomal subunit protein uL18 (118 aa).

Belongs to the universal ribosomal protein uL18 family. In terms of assembly, part of the 50S ribosomal subunit; part of the 5S rRNA/L5/L18/L25 subcomplex. Contacts the 5S and 23S rRNAs.

Functionally, this is one of the proteins that bind and probably mediate the attachment of the 5S RNA into the large ribosomal subunit, where it forms part of the central protuberance. This is Large ribosomal subunit protein uL18 from Sulfurovum sp. (strain NBC37-1).